A 314-amino-acid chain; its full sequence is Ribonuclease Z (314 aa).

Residues His-61, His-63, Asp-65, His-66, His-137, Asp-207, and His-263 each contribute to the Zn(2+) site. The active-site Proton acceptor is Asp-65.

The protein belongs to the RNase Z family. As to quaternary structure, homodimer. Zn(2+) serves as cofactor.

It catalyses the reaction Endonucleolytic cleavage of RNA, removing extra 3' nucleotides from tRNA precursor, generating 3' termini of tRNAs. A 3'-hydroxy group is left at the tRNA terminus and a 5'-phosphoryl group is left at the trailer molecule.. Zinc phosphodiesterase, which displays some tRNA 3'-processing endonuclease activity. Probably involved in tRNA maturation, by removing a 3'-trailer from precursor tRNA. The polypeptide is Ribonuclease Z (Thermococcus gammatolerans (strain DSM 15229 / JCM 11827 / EJ3)).